We begin with the raw amino-acid sequence, 318 residues long: UPF0725 protein At3g44770 (318 aa).

The protein belongs to the UPF0725 (EMB2204) family.

This chain is UPF0725 protein At3g44770, found in Arabidopsis thaliana (Mouse-ear cress).